The sequence spans 207 residues: Cytochrome c biogenesis ATP-binding export protein CcmA (207 aa).

The ABC transporter domain occupies 4 to 207 (LEARELLCER…RISLTQTRAA (204 aa)). 36–43 (GSNGAGKT) contacts ATP.

This sequence belongs to the ABC transporter superfamily. CcmA exporter (TC 3.A.1.107) family. As to quaternary structure, the complex is composed of two ATP-binding proteins (CcmA) and two transmembrane proteins (CcmB).

It is found in the cell inner membrane. It catalyses the reaction heme b(in) + ATP + H2O = heme b(out) + ADP + phosphate + H(+). Part of the ABC transporter complex CcmAB involved in the biogenesis of c-type cytochromes; once thought to export heme, this seems not to be the case, but its exact role is uncertain. Responsible for energy coupling to the transport system. The chain is Cytochrome c biogenesis ATP-binding export protein CcmA from Shigella boydii serotype 4 (strain Sb227).